Reading from the N-terminus, the 372-residue chain is Adaptive-response sensory-kinase SasA (372 aa).

Positions 147–360 constitute a Histidine kinase domain; sequence MVAHELRTPL…CFHFTVPVWQ (214 aa). Histidine 150 is subject to Phosphohistidine; by autocatalysis.

As to quaternary structure, homooligomerizes. Interacts with KaiC. Participates in the KaiBC complex, whose core is composed of a KaiC homohexamer and 6 KaiB.

It catalyses the reaction ATP + protein L-histidine = ADP + protein N-phospho-L-histidine.. Member of the two-component regulatory system SasA/RpaA involved in genome-wide circadian gene expression. One of several clock output pathways. Participates in the Kai clock protein complex, the main circadian regulator in cyanobacteria, via its interaction with KaiC. KaiC enhances the autophosphorylation activity of SasA, which then transfers its phosphate group to RpaA to activate it. In addition to its output function, recruits fold-shifted KaiB (KaiB(fs)) to KaiC to cooperatively form the KaiB(6):KaiC(6) complex (independent of SasA kinase activity). Required for robustness of the circadian rhythm of gene expression and is involved in clock output, also required for adaptation to light/dark cycles. The sequence is that of Adaptive-response sensory-kinase SasA from Prochlorococcus marinus subsp. pastoris (strain CCMP1986 / NIES-2087 / MED4).